The chain runs to 129 residues: Small ribosomal subunit protein uS9 (129 aa).

Belongs to the universal ribosomal protein uS9 family.

The protein is Small ribosomal subunit protein uS9 (rpsI) of Treponema pallidum (strain Nichols).